The primary structure comprises 424 residues: Phosphoprotein associated with glycosphingolipid-enriched microdomains 1 (424 aa).

At Met-1–Met-17 the chain is on the extracellular side. The chain crosses the membrane as a helical; Signal-anchor for type III membrane protein span at residues Val-18 to Leu-38. Residues Cys-39 and Cys-42 are each lipidated (S-palmitoyl cysteine). Topologically, residues Cys-39 to Leu-424 are cytoplasmic. A phosphoserine mark is found at Ser-52 and Ser-63. Tyr-107 carries the phosphotyrosine; by LYN modification. Residue Ser-157 is modified to Phosphoserine. Phosphotyrosine occurs at positions 165, 183, and 224. The tract at residues Asp-194–Cys-347 is disordered. Over residues Ala-215–Asn-230 the composition is skewed to basic and acidic residues. Ser-226 bears the Phosphoserine mark. Over residues Ser-236–Ser-247 the composition is skewed to polar residues. Tyr-314 is subject to Phosphotyrosine; by FYN and LYN. The interval Tyr-314–Val-317 is interaction with CSK. Residues Ser-331–Cys-347 show a composition bias toward polar residues. A Phosphoserine modification is found at Ser-346. Tyr-351, Tyr-381, and Tyr-409 each carry phosphotyrosine. A disordered region spans residues Pro-361–Leu-424. The interval Thr-422 to Leu-424 is interaction with NHERF1.

As to quaternary structure, interacts with NHERF1/EBP50. In resting T-cells, part of a PAG1-NHERF1-MSN complex which is disrupted upon TCR activation. When phosphorylated, interacts with CSK. Identified in a complex with LYN and STAT3. Interacts with LYN. In terms of processing, palmitoylated. Phosphorylated by FYN on Tyr-314 in resting T-cells; which promotes interaction with CSK. Dephosphorylated by PTPRC/CD45 upon TCR activation; which leads to CSK dissociation. May also be dephosphorylated by PTPN11. Hyperphosphorylated in mast cells upon FCER1 activation. Phosphorylated by LYN in response to EPO. Ubiquitously expressed, with highest levels in developing brain, lung, thymus, spleen and testis. Present in mast cells.

The protein localises to the cell membrane. Functionally, negatively regulates TCR (T-cell antigen receptor)-mediated signaling in T-cells and FCER1 (high affinity immunoglobulin epsilon receptor)-mediated signaling in mast cells. Promotes CSK activation and recruitment to lipid rafts, which results in LCK inhibition. Inhibits immunological synapse formation by preventing dynamic arrangement of lipid raft proteins. May be involved in cell adhesion signaling. The polypeptide is Phosphoprotein associated with glycosphingolipid-enriched microdomains 1 (Pag1) (Rattus norvegicus (Rat)).